The sequence spans 201 residues: Large ribosomal subunit protein uL4 (201 aa).

The disordered stretch occupies residues 39 to 72 (KRQGTSAQKSRSEVIGSGKKPWRQKGTGRARAGS).

It belongs to the universal ribosomal protein uL4 family. In terms of assembly, part of the 50S ribosomal subunit.

Functionally, one of the primary rRNA binding proteins, this protein initially binds near the 5'-end of the 23S rRNA. It is important during the early stages of 50S assembly. It makes multiple contacts with different domains of the 23S rRNA in the assembled 50S subunit and ribosome. Forms part of the polypeptide exit tunnel. The sequence is that of Large ribosomal subunit protein uL4 from Wigglesworthia glossinidia brevipalpis.